Here is a 352-residue protein sequence, read N- to C-terminus: Glycoprotein integral membrane protein 1 (352 aa).

The signal sequence occupies residues 1–25 (MASRCKIHLTVAYLLILCILASAQS). At 26–281 (KQMTTETVVL…KLRRFLSDSV (256 aa)) the chain is on the extracellular side. N-linked (GlcNAc...) asparagine glycans are attached at residues Asn36, Asn44, Asn89, Asn109, Asn151, and Asn197. The segment at 206-245 (NSETTQEEIAAPGKLPETPLRMDPETLYESREEEERRSDS) is disordered. A compositionally biased stretch (basic and acidic residues) spans 225–244 (LRMDPETLYESREEEERRSD). A helical membrane pass occupies residues 282 to 302 (PLFFLVMWVVVVGVAGSAVVI). At 303–352 (KILDLIFPSCEHRGFFHLNPETLMPDDEKVSLIDNMEGDMTEKSILLIEK) the chain is on the cytoplasmic side.

The protein localises to the membrane. This is Glycoprotein integral membrane protein 1 (ginm1) from Danio rerio (Zebrafish).